The chain runs to 294 residues: MRTDGDSWDIVSSVGLTALGVATFRALETVRPDALIQDDYARWFVEAAGEPHFTGLLADPSLLGDMRFSGFMGSRTRFFDEFFSSATGAGVSQAVILAAGLDARAYRLDWPTGTTVFEVDQPQVLEFKAEVLADHGATAKADRRPVAVDLRDDWPAALEAAGFDPGKPTAWSVEGLLAYLPGAAHDALFERIDELSSPGSHVAVDNFAEGTDMQRFDAIRAKYFAENPFGDIDIAELFYGDERADPVQWLTGHGWSVRRSTSLELAAAYGRPVPDLPEELVDLSERSTYLTAVK.

Residues D120 and 149 to 150 each bind S-adenosyl-L-methionine; that span reads DL.

The protein belongs to the UPF0677 family.

Its function is as follows. Exhibits S-adenosyl-L-methionine-dependent methyltransferase activity. The chain is Putative S-adenosyl-L-methionine-dependent methyltransferase RHA1_ro00605 from Rhodococcus jostii (strain RHA1).